Consider the following 105-residue polypeptide: Met repressor (105 aa).

This sequence belongs to the MetJ family. As to quaternary structure, homodimer.

Its subcellular location is the cytoplasm. This regulatory protein, when combined with SAM (S-adenosylmethionine) represses the expression of the methionine regulon and of enzymes involved in SAM synthesis. The sequence is that of Met repressor from Actinobacillus succinogenes (strain ATCC 55618 / DSM 22257 / CCUG 43843 / 130Z).